Reading from the N-terminus, the 547-residue chain is Glucose-6-phosphate isomerase 2 (547 aa).

Residue Glu-351 is the Proton donor of the active site. Catalysis depends on residues His-382 and Lys-508.

Belongs to the GPI family.

It is found in the cytoplasm. The catalysed reaction is alpha-D-glucose 6-phosphate = beta-D-fructose 6-phosphate. The protein operates within carbohydrate biosynthesis; gluconeogenesis. It functions in the pathway carbohydrate degradation; glycolysis; D-glyceraldehyde 3-phosphate and glycerone phosphate from D-glucose: step 2/4. Its function is as follows. Catalyzes the reversible isomerization of glucose-6-phosphate to fructose-6-phosphate. The chain is Glucose-6-phosphate isomerase 2 from Neisseria gonorrhoeae (strain ATCC 700825 / FA 1090).